The primary structure comprises 111 residues: Secreted RxLR effector protein 159 (111 aa).

The N-terminal stretch at 1-21 is a signal peptide; the sequence is MRGAYYVAIAFLVAASSRTAA. The short motif at 50–71 is the RxLR-dEER element; sequence RVLRGSRDLKDKLAVYANDEQR. An N-linked (GlcNAc...) asparagine glycan is attached at Asn81.

This sequence belongs to the RxLR effector family.

It localises to the secreted. The protein resides in the host nucleus. The protein localises to the host cytoplasm. Functionally, secreted effector that completely suppresses the host cell death induced by cell death-inducing proteins. In Plasmopara viticola (Downy mildew of grapevine), this protein is Secreted RxLR effector protein 159.